Here is a 518-residue protein sequence, read N- to C-terminus: DHTALDLIIKSLKSPTMVCEGTHFDGKIPHTFVIFGASGDLAKKKIYPKLWWFYRDDLLPKLTKFCGYARSMLTVDSIKEQCLPYMKVQSHEQKKYEEFWALNEYVSGRYDGRTGFELLNQQLELMENKNKANRIFYLALPPSVFEEVTVNIKQICMSVCGWNRVIIEKPFGRDDASSQALSDHLAALFHEDQLYRIDHYLGKEMVQNLMTIRFGNKILSSTWNRENIASVLITFKEPFGTQGRGGYFDEFGIIRDVMQNHLLQILSLVAMEKPVSCHPDDIRDEKVKVLKSIETLTLKDMVLGQYLGNPQGTTDDARTGYVEDPTVSDDSNTPTYALGVLKINNERWQGVPFILRCGKRLNERKAEVRIQYQDVPGDIFEGNTKRNELVIRVQPGEALYFKMMTKSPGITFDIEETELDLTYEHRYKDSYLPDAYERLILDVFCGSQMHFVRSDQLREAWRIFTPILHQIEREHIRPITYQYGSRGPKEADRMCEENNFKYSGSYKWHGGKAATSNL.

Residues 36-43 (GASGDLAK), R70, and K169 contribute to the NADP(+) site. D-glucose 6-phosphate contacts are provided by residues K169, 199 to 203 (HYLGK), E237, and D256. The active-site Proton acceptor is H261. Position 356 (R356) interacts with NADP(+). D-glucose 6-phosphate is bound by residues K359 and R364. Residues K365, R369, and R392 each coordinate NADP(+). Q394 is a D-glucose 6-phosphate binding site. NADP(+)-binding positions include 400 to 402 (YFK), 420 to 422 (DLT), R486, Y502, and W508.

This sequence belongs to the glucose-6-phosphate dehydrogenase family.

It localises to the cytoplasm. It is found in the cytosol. It carries out the reaction D-glucose 6-phosphate + NADP(+) = 6-phospho-D-glucono-1,5-lactone + NADPH + H(+). It participates in carbohydrate degradation; pentose phosphate pathway; D-ribulose 5-phosphate from D-glucose 6-phosphate (oxidative stage): step 1/3. In terms of biological role, cytosolic glucose-6-phosphate dehydrogenase that catalyzes the first and rate-limiting step of the oxidative branch within the pentose phosphate pathway/shunt, an alternative route to glycolysis for the dissimilation of carbohydrates and a major source of reducing power and metabolic intermediates for fatty acid and nucleic acid biosynthetic processes. The protein is Glucose-6-phosphate 1-dehydrogenase (Zw) of Drosophila yakuba (Fruit fly).